The chain runs to 430 residues: Tol-Pal system protein TolB (430 aa).

The first 19 residues, 1–19 (MKKQIFFTLILLISGLARA), serve as a signal peptide directing secretion.

It belongs to the TolB family. As to quaternary structure, the Tol-Pal system is composed of five core proteins: the inner membrane proteins TolA, TolQ and TolR, the periplasmic protein TolB and the outer membrane protein Pal. They form a network linking the inner and outer membranes and the peptidoglycan layer.

It localises to the periplasm. Its function is as follows. Part of the Tol-Pal system, which plays a role in outer membrane invagination during cell division and is important for maintaining outer membrane integrity. The protein is Tol-Pal system protein TolB of Hahella chejuensis (strain KCTC 2396).